The primary structure comprises 454 residues: MTEKEHFFWNKLLELAKEELTQATFDYYVLDTKLIKIQDNVATILLEEVKKLFWEKNMQSFILMTGFEVYNSEIKVEYVFDEALVSETKPTLANNDFSNKREQQTPDLPTLNSDLNSKYTFDNFIQGDENRWSVAASLAVADSPGATYNPLFIYGGPGLGKTHLLNAIGNKVLHDNPQARIKYITAENFINEFVLHIRLDKMDELKLKYRHLDVLLIDDIQSLAKKSTQATQEEFFNTFNVLHDNNKQIVLTSDRNPDQLNEMEERLVTRFKWGLTVNITPPDFETRVAILTNKIMDYDYHFPPETIEYLAGQFDSNVRDLEGALKDISLVANVRQLDTITVEVAAEAIRARKIDGPKLTLIPIEDIQSEVGKFYNVTVKEIKATKRTQNIVLARQVAMYLAREMTDNSLPKIGKEFGGRDHSTVLHAYNKIKNMLAQDDSLRIEIDTIKNKIK.

A domain I, interacts with DnaA modulators region spans residues 1-83 (MTEKEHFFWN…IKVEYVFDEA (83 aa)). The domain II stretch occupies residues 83 to 113 (ALVSETKPTLANNDFSNKREQQTPDLPTLNS). The domain III, AAA+ region stretch occupies residues 114–332 (DLNSKYTFDN…GALKDISLVA (219 aa)). Residues Gly-158, Gly-160, Lys-161, and Thr-162 each coordinate ATP. Residues 333-454 (NVRQLDTITV…EIDTIKNKIK (122 aa)) are domain IV, binds dsDNA.

The protein belongs to the DnaA family. As to quaternary structure, oligomerizes as a right-handed, spiral filament on DNA at oriC.

The protein resides in the cytoplasm. Functionally, plays an essential role in the initiation and regulation of chromosomal replication. ATP-DnaA binds to the origin of replication (oriC) to initiate formation of the DNA replication initiation complex once per cell cycle. Binds the DnaA box (a 9 base pair repeat at the origin) and separates the double-stranded (ds)DNA. Forms a right-handed helical filament on oriC DNA; dsDNA binds to the exterior of the filament while single-stranded (ss)DNA is stabiized in the filament's interior. The ATP-DnaA-oriC complex binds and stabilizes one strand of the AT-rich DNA unwinding element (DUE), permitting loading of DNA polymerase. After initiation quickly degrades to an ADP-DnaA complex that is not apt for DNA replication. Binds acidic phospholipids. The polypeptide is Chromosomal replication initiator protein DnaA (Streptococcus thermophilus (strain ATCC BAA-250 / LMG 18311)).